The primary structure comprises 689 residues: DNA topoisomerase 1 (689 aa).

The 111-residue stretch at 3 to 113 folds into the Toprim domain; that stretch reads DNLVIVESPA…KENRVVFNEI (111 aa). Positions 9 and 82 each coordinate Mg(2+). A Topo IA-type catalytic domain is found at 129 to 557; the sequence is EMNLVDAQQA…FFSSFKQDVE (429 aa). Residues 163–168 are interaction with DNA; sequence SAGRVQ. The active-site O-(5'-phospho-DNA)-tyrosine intermediate is the Tyr298. Residues 328–356 form a disordered region; it reads SKRKASGKQGDQDAHEAIRPSSTMRTPDD. C4-type zinc fingers lie at residues 577 to 603, 617 to 645, and 658 to 681; these read CEIC…FPDC, CPKC…YPEC, and CPKC…CSNC.

It belongs to the type IA topoisomerase family. Monomer. Mg(2+) serves as cofactor.

The catalysed reaction is ATP-independent breakage of single-stranded DNA, followed by passage and rejoining.. Releases the supercoiling and torsional tension of DNA, which is introduced during the DNA replication and transcription, by transiently cleaving and rejoining one strand of the DNA duplex. Introduces a single-strand break via transesterification at a target site in duplex DNA. The scissile phosphodiester is attacked by the catalytic tyrosine of the enzyme, resulting in the formation of a DNA-(5'-phosphotyrosyl)-enzyme intermediate and the expulsion of a 3'-OH DNA strand. The free DNA strand then undergoes passage around the unbroken strand, thus removing DNA supercoils. Finally, in the religation step, the DNA 3'-OH attacks the covalent intermediate to expel the active-site tyrosine and restore the DNA phosphodiester backbone. The chain is DNA topoisomerase 1 from Staphylococcus aureus (strain USA300).